Reading from the N-terminus, the 1738-residue chain is Sodium leak channel NALCN (1738 aa).

Residues 1 to 36 lie on the Cytoplasmic side of the membrane; the sequence is MLKRKQSSRVEAQPVTDFGPDESLSDNADILWINKP. A helical transmembrane segment spans residues 37–57; it reads WVHSLLRICAIISVISVCMNT. The Extracellular portion of the chain corresponds to 58-65; that stretch reads PMTFEHYP. A helical membrane pass occupies residues 66-90; it reads PLQYVTFTLDTLLMFLYTAEMIAKM. Topologically, residues 91–106 are cytoplasmic; that stretch reads HIRGIVKGDSSYVKDR. The chain crosses the membrane as a helical span at residues 107–129; it reads WCVFDGFMVFCLWVSLVLQVFEI. Over 130 to 137 the chain is Extracellular; sequence ADIVDQMS. Residues 138–158 traverse the membrane as a helical; Voltage-sensor segment; it reads PWGMLRIPRPLIMIRAFRIYF. Topologically, residues 159 to 173 are cytoplasmic; it reads RFELPRTRITNILKR. The helical transmembrane segment at 174 to 199 threads the bilayer; the sequence is SGEQIWSVSIFLLFFLLLYGILGVQM. The Extracellular segment spans residues 200–269; that stretch reads FGTFTYHCVV…YSGFNEIGTS (70 aa). 2 cysteine pairs are disulfide-bonded: C207-C239 and C229-C245. 2 N-linked (GlcNAc...) asparagine glycosylation sites follow: N210 and N216. Positions 270 to 289 form an intramembrane region, pore-forming; that stretch reads IFTVYEAASQEGWVFLMYRA. At 290-294 the chain is on the extracellular side; that stretch reads IDSFP. The helical transmembrane segment at 295 to 322 threads the bilayer; it reads RWRSYFYFITLIFFLAWLVKNVFIAVII. The Cytoplasmic portion of the chain corresponds to 323-382; it reads ETFAEIRVQFQQMWGSRSSTTSTATTQMFHEDAAGGWQLVAVDVNKPQGRAPACLQKMMR. The chain crosses the membrane as a helical span at residues 383-403; it reads SSVFHMFILSMVTVDVIVAAS. Residues 404–416 lie on the Extracellular side of the membrane; it reads NYYKGENFRRQYD. Residues 417–439 form a helical membrane-spanning segment; the sequence is EFYLAEVAFTVLFDLEALLKIWC. Residues 440 to 447 are Cytoplasmic-facing; it reads LGFTGYIS. The chain crosses the membrane as a helical span at residues 448-468; the sequence is SSLHKFELLLVIGTTLHVYPD. Over 469-472 the chain is Extracellular; sequence LYHS. The chain crosses the membrane as a helical; Voltage-sensor span at residues 473 to 492; that stretch reads QFTYFQVLRVVRLIKISPAL. Residues 493-502 are Cytoplasmic-facing; sequence EDFVYKIFGP. The helical transmembrane segment at 503–530 threads the bilayer; sequence GKKLGSLVVFTASLLIVMSAISLQMFCF. Residues 531–543 lie on the Extracellular side of the membrane; sequence VEELDRFTTFPRA. An intramembrane region (pore-forming) is located at residues 544–563; it reads FMSMFQILTQEGWVDVMDQT. Over 564–569 the chain is Extracellular; that stretch reads LNAVGH. Residues 570-599 traverse the membrane as a helical segment; sequence MWAPVVAIYFILYHLFATLILLSLFVAVIL. The Cytoplasmic segment spans residues 600 to 886; that stretch reads DNLELDEDLK…QLYDLLGLVT (287 aa). Positions 762–785 are disordered; sequence QERRSLRHGSNSQRISRGKSLETL. Residues 795–830 adopt a coiled-coil conformation; the sequence is YRNAQREDSEIKMIQEKKEQAEMKRKVQEEELRENH. A helical membrane pass occupies residues 887 to 906; that stretch reads YLDWVMIIVTICSCISMMFE. At 907–915 the chain is on the extracellular side; it reads SPFRRVMHA. Residues 916-939 form a helical membrane-spanning segment; it reads PTLQIAEYVFVIFMSIELNLKIMA. The Cytoplasmic portion of the chain corresponds to 940–947; that stretch reads DGLFFTPT. A helical membrane pass occupies residues 948-972; that stretch reads AVIRDFGGVMDIFIYLVSLIFLCWM. The Extracellular segment spans residues 973–980; that stretch reads PQNVPAES. The helical; Voltage-sensor transmembrane segment at 981–1003 threads the bilayer; the sequence is GAQLLMVLRCLRPLRIFKLVPQM. The Cytoplasmic portion of the chain corresponds to 1004-1015; it reads RKVVRELFSGFK. Residues 1016 to 1039 traverse the membrane as a helical segment; the sequence is EIFLVSILLLTLMLVFASFGVQLF. Residues 1040–1104 are Extracellular-facing; it reads AGKLAKCNDP…NFNFDNVGNA (65 aa). C1046 and C1057 form a disulfide bridge. N-linked (GlcNAc...) asparagine glycosylation is present at N1064. Residues 1105 to 1124 constitute an intramembrane region (pore-forming); sequence MLALFEVLSLKGWVEVRDVI. The Extracellular segment spans residues 1125–1129; it reads IHRVG. Residues 1130–1159 traverse the membrane as a helical segment; the sequence is PIHGIYIHVFVFLGCMIGLTLFVGVVIANF. Residues 1160-1210 are Cytoplasmic-facing; it reads NENKGTALLTVDQRRWEDLKSRLKIAQPLHLPPRPDNDGFRAKMYDITQHP. A helical membrane pass occupies residues 1211–1227; that stretch reads FFKRTIALLVLAQSVLL. Topologically, residues 1228–1236 are extracellular; the sequence is SVKWDVEDP. The helical transmembrane segment at 1237–1260 threads the bilayer; the sequence is VTVPLATMSVVFTFIFVLEVTMKI. Topologically, residues 1261–1271 are cytoplasmic; sequence IAMSPAGFWQS. Residues 1272–1293 traverse the membrane as a helical segment; the sequence is RRNRYDLLVTSLGVVWVVLHFA. Residues 1294–1296 are Extracellular-facing; the sequence is LLN. A helical; Voltage-sensor membrane pass occupies residues 1297–1318; it reads AYTYMMGACVIVFRFFSICGKH. The Cytoplasmic portion of the chain corresponds to 1319–1331; that stretch reads VTLKMLLLTVVVS. The helical transmembrane segment at 1332-1357 threads the bilayer; sequence MYKSFFIIVGMFLLLLCYAFAGVVLF. Residues 1358 to 1378 lie on the Extracellular side of the membrane; it reads GTVKYGENINRHANFSSAGKA. Residues 1379 to 1398 constitute an intramembrane region (pore-forming); sequence ITVLFRIVTGEDWNKIMHDC. Residues 1399-1420 are Extracellular-facing; sequence MVQPPFCTPDEFTYWATDCGNY. C1405 and C1417 form a disulfide bridge. The chain crosses the membrane as a helical span at residues 1421–1447; the sequence is AGALMYFCSFYVIIAYIMLNLLVAIIV. The Cytoplasmic portion of the chain corresponds to 1448–1738; the sequence is ENFSLFYSTE…DESGDDLLDI (291 aa). A disordered region spans residues 1611-1678; it reads PPSIETTQPS…QWRLPSAPKP (68 aa). The segment covering 1613–1632 has biased composition (polar residues); the sequence is SIETTQPSEDTNANSQDNSM. Residues 1633–1648 are compositionally biased toward low complexity; that stretch reads QPETSSQQQLLSPTLS.

Belongs to the NALCN family. Found in a complex with NALCN, UNC79, UNC80 and NACL1; these auxiliary subunits are indispensable for the function of NALCN channel. Interacts with UNC80; required for the NALCN activation/inhibition by GPCRs in neurons. Found in a complex with NALCN, UNC79 and UNC80; UNC80 bridges NALCN to UNC79. Interacts with CHRM3. In terms of processing, phosphorylated on tyrosine residues.

It is found in the cell membrane. It carries out the reaction Na(+)(in) = Na(+)(out). With respect to regulation, inhibited by low micromolar concentrations of Gd(3+) and high micromolar concentrations of verapamil. Insensitive to tetrodotoxin (TTX) and potentiated by low external Ca(2+) concentration. Functionally, voltage-gated ion channel responsible for the resting Na(+) permeability that controls neuronal excitability. NALCN channel functions as a multi-protein complex, which consists at least of NALCN, NALF1, UNC79 and UNC80. NALCN is the voltage-sensing, pore-forming subunit of the NALCN channel complex. NALCN channel complex is constitutively active and conducts monovalent cations but is blocked by physiological concentrations of extracellular divalent cations. In addition to its role in regulating neuronal excitability, is required for normal respiratory rhythm, systemic osmoregulation by controlling the serum sodium concentration and in the regulation of the intestinal pace-making activity in the interstitial cells of Cajal. NALCN channel is also activated by neuropeptides such as neurotensin and substance P (SP) through a SRC family kinases-dependent pathway. In addition, NALCN activity is enhanced/modulated by several GPCRs, such as CHRM3. The chain is Sodium leak channel NALCN from Homo sapiens (Human).